A 358-amino-acid chain; its full sequence is Histamine H2 receptor (358 aa).

Over 1–22 the chain is Extracellular; it reads MEPNGTVHSCCLDSMALKVTIS. N-linked (GlcNAc...) asparagine glycosylation occurs at asparagine 4. Residues 23–44 form a helical membrane-spanning segment; the sequence is VVLTTLILITIAGNVVVCLAVS. At 45–57 the chain is on the cytoplasmic side; sequence LNRRLRSLTNCFI. Residues 58 to 81 form a helical membrane-spanning segment; the sequence is VSLAATDLLLGLLVLPFSAIYQLS. Over 82 to 92 the chain is Extracellular; the sequence is FTWSFGHVFCN. Cysteine 91 and cysteine 173 are joined by a disulfide. A helical transmembrane segment spans residues 93–114; it reads IYTSLDVMLCTASILNLFMISL. The Cytoplasmic portion of the chain corresponds to 115 to 134; it reads DRYCAVTDPLRYPVLVTPVR. Residues 135–159 traverse the membrane as a helical segment; it reads VAISLVFIWVISITLSFLSIHLGWN. Residues 160–179 lie on the Extracellular side of the membrane; that stretch reads SRNGTRGGNDTFKCKVQVNE. Residues 180–203 form a helical membrane-spanning segment; the sequence is VYGLVDGLVTFYLPLLIMCVTYYR. At 204-233 the chain is on the cytoplasmic side; the sequence is IFKIAREQAKRINHISSWKAATIREHKATV. A helical membrane pass occupies residues 234–257; it reads TLAAVMGAFIICWFPYFTAFVYRG. The Extracellular segment spans residues 258 to 266; sequence LRGDDAINE. Residues 267–288 traverse the membrane as a helical segment; the sequence is AVEGIVLWLGYANSALNPILYA. Residues 289–358 lie on the Cytoplasmic side of the membrane; it reads ALNRDFRTAY…LTHPQGNPIR (70 aa). Cysteine 304 is lipidated: S-palmitoyl cysteine.

The protein belongs to the G-protein coupled receptor 1 family.

The protein localises to the cell membrane. In terms of biological role, the H2 subclass of histamine receptors mediates gastric acid secretion. The activity of this receptor is mediated by G proteins which activate adenylyl cyclase. This Rattus norvegicus (Rat) protein is Histamine H2 receptor (Hrh2).